The chain runs to 395 residues: Synaptotagmin-8 (395 aa).

Residues 1-44 lie on the Extracellular side of the membrane; it reads MQADRSMKMGHVSNPLSTSAPVDATAGPNLIPDLITKIPWPRWI. Residues 45-65 form a helical; Signal-anchor for type III membrane protein membrane-spanning segment; the sequence is LFIAILAAGVLLVSCLLCVIC. The Cytoplasmic segment spans residues 66 to 395; it reads YCCHRQRHRK…PRLPLLRPRS (330 aa). 2 consecutive C2 domains span residues 113 to 229 and 241 to 370; these read PWGQ…ESWY and QMGE…AQWH.

Belongs to the synaptotagmin family. Homodimer or homooligomer. Homodimerization and homooligomerization do not depend on Ca(2+). Interacts with SYNCRIP isoform 2 C-terminus. Binds inositol 1,3,4,5-tetrakisphosphate (IP4). Binds to AP2 in a Ca(2+)-independent manner. Interacts with STX1A, STX1B and STX2; the interaction is Ca(2+)-dependent. Ubiquitous. Strongly expressed in heart, kidney, cerebral cortex, pancreas, and many insulin-secreting cells; lower expression in spleen. Broadly distributed in kidney.

It is found in the cell membrane. Its subcellular location is the cytoplasmic vesicle. It localises to the secretory vesicle. The protein localises to the acrosome. In terms of biological role, involved in the trafficking and exocytosis of secretory vesicles in non-neuronal tissues. Mediates Ca(2+)-regulation of exocytosis acrosomal reaction in sperm. May mediate Ca(2+)-regulation of exocytosis in insulin secreted cells. The protein is Synaptotagmin-8 (Syt8) of Rattus norvegicus (Rat).